The sequence spans 150 residues: SsrA-binding protein (150 aa).

The tract at residues Lys127 to Asp150 is disordered.

The protein belongs to the SmpB family.

It is found in the cytoplasm. Functionally, required for rescue of stalled ribosomes mediated by trans-translation. Binds to transfer-messenger RNA (tmRNA), required for stable association of tmRNA with ribosomes. tmRNA and SmpB together mimic tRNA shape, replacing the anticodon stem-loop with SmpB. tmRNA is encoded by the ssrA gene; the 2 termini fold to resemble tRNA(Ala) and it encodes a 'tag peptide', a short internal open reading frame. During trans-translation Ala-aminoacylated tmRNA acts like a tRNA, entering the A-site of stalled ribosomes, displacing the stalled mRNA. The ribosome then switches to translate the ORF on the tmRNA; the nascent peptide is terminated with the 'tag peptide' encoded by the tmRNA and targeted for degradation. The ribosome is freed to recommence translation, which seems to be the essential function of trans-translation. In Cupriavidus necator (strain ATCC 17699 / DSM 428 / KCTC 22496 / NCIMB 10442 / H16 / Stanier 337) (Ralstonia eutropha), this protein is SsrA-binding protein.